Reading from the N-terminus, the 831-residue chain is AMP deaminase (831 aa).

Disordered regions lie at residues 26–45 (NPGANRDEEVAAAPSSQDTP), 66–110 (NGTQ…KLLN), and 130–149 (NAVVSSVGGPETDPGNMETT). A phosphoserine mark is found at serine 79 and serine 84. Zn(2+) is bound by residues histidine 319 and histidine 321. Substrate-binding positions include histidine 321 and 390–395 (KFNLKY). Residue histidine 587 participates in Zn(2+) binding. Glutamate 590 contributes to the substrate binding site. Histidine 609 serves as the catalytic Proton acceptor. Residue aspartate 664 participates in Zn(2+) binding. Position 665 to 668 (665 to 668 (DPLQ)) interacts with substrate. A phosphoserine mark is found at serine 758, serine 776, serine 780, and serine 782.

This sequence belongs to the metallo-dependent hydrolases superfamily. Adenosine and AMP deaminases family. As to quaternary structure, homotetramer. Zn(2+) is required as a cofactor.

The protein localises to the cytoplasm. It carries out the reaction AMP + H2O + H(+) = IMP + NH4(+). The protein operates within purine metabolism; IMP biosynthesis via salvage pathway; IMP from AMP: step 1/1. In terms of biological role, AMP deaminase plays a critical role in energy metabolism. In Schizosaccharomyces pombe (strain 972 / ATCC 24843) (Fission yeast), this protein is AMP deaminase (ada1).